Here is a 332-residue protein sequence, read N- to C-terminus: 5-dehydro-2-deoxygluconokinase 1 (332 aa).

This sequence belongs to the carbohydrate kinase PfkB family.

It catalyses the reaction 5-dehydro-2-deoxy-D-gluconate + ATP = 6-phospho-5-dehydro-2-deoxy-D-gluconate + ADP + H(+). Its pathway is polyol metabolism; myo-inositol degradation into acetyl-CoA; acetyl-CoA from myo-inositol: step 5/7. In terms of biological role, catalyzes the phosphorylation of 5-dehydro-2-deoxy-D-gluconate (2-deoxy-5-keto-D-gluconate or DKG) to 6-phospho-5-dehydro-2-deoxy-D-gluconate (DKGP). The polypeptide is 5-dehydro-2-deoxygluconokinase 1 (Bacillus cereus (strain ZK / E33L)).